Consider the following 448-residue polypeptide: Phosphoglucosamine mutase (448 aa).

The active-site Phosphoserine intermediate is the serine 89. Residues serine 89, aspartate 232, aspartate 234, and aspartate 236 each coordinate Mg(2+). The residue at position 89 (serine 89) is a Phosphoserine.

Belongs to the phosphohexose mutase family. In terms of assembly, forms large aggregates. Mg(2+) serves as cofactor. In terms of processing, activated by phosphorylation.

It catalyses the reaction alpha-D-glucosamine 1-phosphate = D-glucosamine 6-phosphate. Functionally, catalyzes the conversion of glucosamine-6-phosphate to glucosamine-1-phosphate. This chain is Phosphoglucosamine mutase (glmM), found in Methanocaldococcus jannaschii (strain ATCC 43067 / DSM 2661 / JAL-1 / JCM 10045 / NBRC 100440) (Methanococcus jannaschii).